A 311-amino-acid polypeptide reads, in one-letter code: GTPase Era (311 aa).

The Era-type G domain occupies 18-185 (RSGFVALIGA…AKYLAESVPN (168 aa)). Positions 26–33 (GAPNAGKS) are G1. 26–33 (GAPNAGKS) lines the GTP pocket. The segment at 52 to 56 (QTTRA) is G2. The G3 stretch occupies residues 73-76 (DTPG). Residues 73–77 (DTPGI) and 135–138 (NKVD) contribute to the GTP site. Residues 135-138 (NKVD) form a G4 region. Residues 164-166 (ISA) form a G5 region. Residues 216 to 293 (LHEELPYAST…HLFLFVKVRE (78 aa)) form the KH type-2 domain.

The protein belongs to the TRAFAC class TrmE-Era-EngA-EngB-Septin-like GTPase superfamily. Era GTPase family. Monomer.

The protein resides in the cytoplasm. It localises to the cell inner membrane. Functionally, an essential GTPase that binds both GDP and GTP, with rapid nucleotide exchange. Plays a role in 16S rRNA processing and 30S ribosomal subunit biogenesis and possibly also in cell cycle regulation and energy metabolism. The sequence is that of GTPase Era from Brucella suis biovar 1 (strain 1330).